We begin with the raw amino-acid sequence, 267 residues long: Kit ligand (267 aa).

A signal peptide spans 1-25 (MKKTQTWIITCIYLQLLLFNPLVHT). Glutamine 26 carries the pyrrolidone carboxylic acid modification. Topologically, residues 26–215 (QGICRNRVTD…SNSIEDSSLQ (190 aa)) are extracellular. Intrachain disulfides connect cysteine 29/cysteine 114 and cysteine 68/cysteine 164. N-linked (GlcNAc...) asparagine glycosylation is found at asparagine 90, asparagine 97, asparagine 145, and asparagine 196. Residues 216–238 (WAAVALPAFFSLVIGFAFGALYW) traverse the membrane as a helical segment. Topologically, residues 239–267 (KKKQPNLTRTVENRQINEEDNEISMLQEK) are cytoplasmic.

It belongs to the SCF family. As to quaternary structure, homodimer, non-covalently linked. Heterotetramer with KIT, binding two KIT molecules; thereby mediates KIT dimerization and subsequent activation by autophosphorylation. A soluble form is produced by proteolytic processing of the extracellular domain.

Its subcellular location is the cytoplasm. It is found in the cytoskeleton. The protein localises to the cell membrane. The protein resides in the cell projection. It localises to the lamellipodium. Its subcellular location is the filopodium. It is found in the secreted. Functionally, ligand for the receptor-type protein-tyrosine kinase KIT. Plays an essential role in the regulation of cell survival and proliferation, hematopoiesis, stem cell maintenance, gametogenesis, mast cell development, migration and function, and in melanogenesis. KITLG/SCF binding can activate several signaling pathways. Promotes phosphorylation of PIK3R1, the regulatory subunit of phosphatidylinositol 3-kinase, and subsequent activation of the kinase AKT1. KITLG/SCF and KIT also transmit signals via GRB2 and activation of RAS, RAF1 and the MAP kinases MAPK1/ERK2 and/or MAPK3/ERK1. KITLG/SCF and KIT promote activation of STAT family members STAT1, STAT3 and STAT5. KITLG/SCF and KIT promote activation of PLCG1, leading to the production of the cellular signaling molecules diacylglycerol and inositol 1,4,5-trisphosphate. KITLG/SCF acts synergistically with other cytokines, probably interleukins. This chain is Kit ligand (KITLG), found in Ovis aries (Sheep).